Reading from the N-terminus, the 316-residue chain is Methionyl-tRNA formyltransferase (316 aa).

Residue 114–117 (SLLP) coordinates (6S)-5,6,7,8-tetrahydrofolate.

It belongs to the Fmt family.

It catalyses the reaction L-methionyl-tRNA(fMet) + (6R)-10-formyltetrahydrofolate = N-formyl-L-methionyl-tRNA(fMet) + (6S)-5,6,7,8-tetrahydrofolate + H(+). Functionally, attaches a formyl group to the free amino group of methionyl-tRNA(fMet). The formyl group appears to play a dual role in the initiator identity of N-formylmethionyl-tRNA by promoting its recognition by IF2 and preventing the misappropriation of this tRNA by the elongation apparatus. In Aromatoleum aromaticum (strain DSM 19018 / LMG 30748 / EbN1) (Azoarcus sp. (strain EbN1)), this protein is Methionyl-tRNA formyltransferase.